A 201-amino-acid polypeptide reads, in one-letter code: Protein CD300H (201 aa).

The N-terminal stretch at 1-24 is a signal peptide; that stretch reads MTQRAGAAMLPSALLLLCVPGCLT. The Ig-like V-type domain occupies 25–123; it reads VSGPSTVMGA…ATILQEDGLS (99 aa). At 25–168 the chain is on the extracellular side; it reads VSGPSTVMGA…CQGSLPSSTC (144 aa). An intrachain disulfide couples cysteine 43 to cysteine 111. An N-linked (GlcNAc...) asparagine glycan is attached at asparagine 100. The helical transmembrane segment at 169-189 threads the bilayer; that stretch reads FLLLPLLKVPLLLSILGAILW. The Cytoplasmic segment spans residues 190 to 201; that stretch reads VNRPWRTPWTES.

It belongs to the CD300 family. As to quaternary structure, interacts with TYROBP and HCST. Expressed on CD16+ monocytes and myeloid dendritic cells (at protein level). By contrast, not detected in lymphocytes nor granulocytes (at protein level).

The protein resides in the membrane. Its subcellular location is the secreted. Its function is as follows. May play an important role in innate immunity by mediating a signal for the production of a neutrophil chemoattractant. This is Protein CD300H from Homo sapiens (Human).